The primary structure comprises 863 residues: FO synthase (863 aa).

2 Radical SAM core domains span residues 91-343 and 551-792; these read ITYS…APPN and VTFV…SHIQ. The interval 92–424 is cofG-like; sequence TYSRKVFIPV…PRVRGHVVAL (333 aa). Cys105, Cys109, Cys112, Cys565, Cys569, and Cys572 together coordinate [4Fe-4S] cluster. Positions 528 to 861 are cofH-like; the sequence is DGPALEAVTA…RQRTTTYALR (334 aa).

It in the N-terminal section; belongs to the radical SAM superfamily. CofG family. In the C-terminal section; belongs to the radical SAM superfamily. CofH family. It depends on [4Fe-4S] cluster as a cofactor.

It catalyses the reaction 5-amino-6-(D-ribitylamino)uracil + L-tyrosine + S-adenosyl-L-methionine = 5-amino-5-(4-hydroxybenzyl)-6-(D-ribitylimino)-5,6-dihydrouracil + 2-iminoacetate + 5'-deoxyadenosine + L-methionine + H(+). The catalysed reaction is 5-amino-5-(4-hydroxybenzyl)-6-(D-ribitylimino)-5,6-dihydrouracil + S-adenosyl-L-methionine = 7,8-didemethyl-8-hydroxy-5-deazariboflavin + 5'-deoxyadenosine + L-methionine + NH4(+) + H(+). It functions in the pathway cofactor biosynthesis; coenzyme F0 biosynthesis. Functionally, catalyzes the radical-mediated synthesis of 7,8-didemethyl-8-hydroxy-5-deazariboflavin (FO) from 5-amino-6-(D-ribitylamino)uracil and L-tyrosine. In Mycobacterium leprae (strain TN), this protein is FO synthase (fbiC).